The primary structure comprises 242 residues: Uridylate kinase (242 aa).

ATP contacts are provided by residues 15 to 18 (KISG), Gly58, and Arg62. UMP is bound by residues Asp77 and 139–146 (TGNPFFTT). Residues Thr166, Tyr172, and Asp175 each coordinate ATP.

It belongs to the UMP kinase family. Homohexamer.

The protein localises to the cytoplasm. The catalysed reaction is UMP + ATP = UDP + ADP. It participates in pyrimidine metabolism; CTP biosynthesis via de novo pathway; UDP from UMP (UMPK route): step 1/1. Its activity is regulated as follows. Inhibited by UTP. Functionally, catalyzes the reversible phosphorylation of UMP to UDP. This is Uridylate kinase from Buchnera aphidicola subsp. Acyrthosiphon pisum (strain APS) (Acyrthosiphon pisum symbiotic bacterium).